The sequence spans 491 residues: Probable glycine dehydrogenase (decarboxylating) subunit 2 (491 aa).

Position 273 is an N6-(pyridoxal phosphate)lysine (lysine 273).

It belongs to the GcvP family. C-terminal subunit subfamily. As to quaternary structure, the glycine cleavage system is composed of four proteins: P, T, L and H. In this organism, the P 'protein' is a heterodimer of two subunits. Pyridoxal 5'-phosphate is required as a cofactor.

It catalyses the reaction N(6)-[(R)-lipoyl]-L-lysyl-[glycine-cleavage complex H protein] + glycine + H(+) = N(6)-[(R)-S(8)-aminomethyldihydrolipoyl]-L-lysyl-[glycine-cleavage complex H protein] + CO2. Functionally, the glycine cleavage system catalyzes the degradation of glycine. The P protein binds the alpha-amino group of glycine through its pyridoxal phosphate cofactor; CO(2) is released and the remaining methylamine moiety is then transferred to the lipoamide cofactor of the H protein. The polypeptide is Probable glycine dehydrogenase (decarboxylating) subunit 2 (Bacillus cereus (strain B4264)).